Consider the following 189-residue polypeptide: MILPIIIYGNSFLRKKCIEIDKSYKDINFLINNMYDTMYQAKGIGLSAPQIGLSIRLFIIEYNNFLKQKFKKVFINPIIIKKYGYNLISKEGCLSIPNIIENIKRKNNIIIEYYDENWKKYKQHFNGLLSIIIQHEYDHIEGKLFIDNIFILKNILIKKNFNLNYNLYKLYKLSKLYKFYLIYRSRYRI.

The Fe cation site is built by cysteine 93 and histidine 135. Glutamate 136 is a catalytic residue. Histidine 139 lines the Fe cation pocket.

It belongs to the polypeptide deformylase family. Fe(2+) is required as a cofactor.

The catalysed reaction is N-terminal N-formyl-L-methionyl-[peptide] + H2O = N-terminal L-methionyl-[peptide] + formate. Functionally, removes the formyl group from the N-terminal Met of newly synthesized proteins. Requires at least a dipeptide for an efficient rate of reaction. N-terminal L-methionine is a prerequisite for activity but the enzyme has broad specificity at other positions. This is Peptide deformylase from Karelsulcia muelleri (strain GWSS) (Sulcia muelleri).